The sequence spans 677 residues: DNA ligase (677 aa).

NAD(+) contacts are provided by residues 32 to 36 (DAQYD), 81 to 82 (SL), and E112. K114 functions as the N6-AMP-lysine intermediate in the catalytic mechanism. 4 residues coordinate NAD(+): R135, E171, K288, and K312. Residues C416, C419, C434, and C439 each contribute to the Zn(2+) site. In terms of domain architecture, BRCT spans 598–677 (NKNMPFSGME…REFINMLEQS (80 aa)).

This sequence belongs to the NAD-dependent DNA ligase family. LigA subfamily. Mg(2+) serves as cofactor. The cofactor is Mn(2+).

It carries out the reaction NAD(+) + (deoxyribonucleotide)n-3'-hydroxyl + 5'-phospho-(deoxyribonucleotide)m = (deoxyribonucleotide)n+m + AMP + beta-nicotinamide D-nucleotide.. DNA ligase that catalyzes the formation of phosphodiester linkages between 5'-phosphoryl and 3'-hydroxyl groups in double-stranded DNA using NAD as a coenzyme and as the energy source for the reaction. It is essential for DNA replication and repair of damaged DNA. The protein is DNA ligase of Dehalococcoides mccartyi (strain CBDB1).